A 378-amino-acid chain; its full sequence is MSSTALLPPNTDQVLSRRLHGKAAEKKTGLAAIASKDVDEQSRKLQEYFEFWDRNHENESEEDRARRIDGYKSVVNSYYDLATDLYEYGWSQSFHFSRFYKGEAFAQSIARHEHYLAYRMGIKPGSRVLDVGCGVGGPAREITEFTGCNLVGLNNNDYQISRCNNYAVKRNLDKKQVFVKGDFMHMPFEDNTFDYVYAIEATVHAPSLEGVYGEIFRVLKPGGVFGVYEWVMSDDYDSSIPKHREIAYNIEVGDGIPQMVRKCDAVEAIKKVGFNLLEEDDLTDHDNPDLPWYYPLTGDITKCQNIWDVFTVFRTSRLGKLVTRYSVQFLEKIGVAAKGTSKVGDTLAIAQKGLIEGGETHLFTPMFLMIAKKPETDA.

It belongs to the class I-like SAM-binding methyltransferase superfamily. Erg6/SMT family.

The protein resides in the nucleus. It localises to the endoplasmic reticulum. The enzyme catalyses zymosterol + S-adenosyl-L-methionine = fecosterol + S-adenosyl-L-homocysteine + H(+). It catalyses the reaction lanosterol + S-adenosyl-L-methionine = eburicol + S-adenosyl-L-homocysteine + H(+). Its pathway is steroid metabolism; ergosterol biosynthesis. Its function is as follows. Sterol 24-C-methyltransferase; part of the third module of ergosterol biosynthesis pathway that includes by the late steps of the pathway. Erg6 catalyzes the methyl transfer from S-adenosyl-methionine to the C-24 of zymosterol to form fecosterol. The third module or late pathway involves the ergosterol synthesis itself through consecutive reactions that mainly occur in the endoplasmic reticulum (ER) membrane. Firstly, the squalene synthase erg9 catalyzes the condensation of 2 farnesyl pyrophosphate moieties to form squalene, which is the precursor of all steroids. Secondly, squalene is converted into lanosterol by the consecutive action of the squalene epoxidase erg1 and the lanosterol synthase erg7. The lanosterol 14-alpha-demethylase erg11/cyp1 catalyzes C14-demethylation of lanosterol to produce 4,4'-dimethyl cholesta-8,14,24-triene-3-beta-ol. In the next steps, a complex process involving various demethylation, reduction and desaturation reactions catalyzed by the C-14 reductase erg24 and the C-4 demethylation complex erg25-erg26-erg27 leads to the production of zymosterol. Erg28 likely functions in the C-4 demethylation complex reaction by tethering erg26 and Erg27 to the endoplasmic reticulum or to facilitate interaction between these proteins. Then, the sterol 24-C-methyltransferase erg6 catalyzes the methyl transfer from S-adenosyl-methionine to the C-24 of zymosterol to form fecosterol. The C-8 sterol isomerase erg2 catalyzes the reaction which results in unsaturation at C-7 in the B ring of sterols and thus converts fecosterol to episterol. The sterol-C5-desaturases erg31 and erg32 then catalyze the introduction of a C-5 double bond in the B ring to produce 5-dehydroepisterol. The C-22 sterol desaturase erg5 further converts 5-dehydroepisterol into ergosta-5,7,22,24(28)-tetraen-3beta-ol by forming the C-22(23) double bond in the sterol side chain. Finally, ergosta-5,7,22,24(28)-tetraen-3beta-ol is substrate of the C-24(28) sterol reductase erg4 to produce ergosterol. In the genus Schizosaccharomyces, a second route exists between lanosterol and fecosterol, via the methylation of lanosterol to eburicol by erg6, followed by C14-demethylation by erg11/cyp1 and C4-demethylation by the demethylation complex erg25-erg26-erg27. This is Sterol 24-C-methyltransferase erg6 from Schizosaccharomyces pombe (strain 972 / ATCC 24843) (Fission yeast).